We begin with the raw amino-acid sequence, 211 residues long: Large ribosomal subunit protein mL48 (211 aa).

The transit peptide at 1 to 27 (MSGTLGKVLGVWTNTVSKQGFSLLRFR) directs the protein to the mitochondrion. An N6-succinyllysine modification is found at Lys-198.

It belongs to the mitochondrion-specific ribosomal protein mL48 family. Component of the mitochondrial ribosome large subunit (39S) which comprises a 16S rRNA and about 50 distinct proteins. Interacts with OXA1L.

The protein localises to the mitochondrion. This Mus musculus (Mouse) protein is Large ribosomal subunit protein mL48 (Mrpl48).